The primary structure comprises 138 residues: Holo-[acyl-carrier-protein] synthase (138 aa).

Mg(2+)-binding residues include aspartate 8 and glutamate 60.

It belongs to the P-Pant transferase superfamily. AcpS family. Requires Mg(2+) as cofactor.

The protein resides in the cytoplasm. It carries out the reaction apo-[ACP] + CoA = holo-[ACP] + adenosine 3',5'-bisphosphate + H(+). Transfers the 4'-phosphopantetheine moiety from coenzyme A to a Ser of acyl-carrier-protein. This is Holo-[acyl-carrier-protein] synthase from Magnetococcus marinus (strain ATCC BAA-1437 / JCM 17883 / MC-1).